We begin with the raw amino-acid sequence, 601 residues long: Urocanate hydratase (601 aa).

NAD(+) contacts are provided by residues 63-64 (GG) and Q141. Positions 172–201 (SDRPSALLKQGLSPEGTAPGSGRSSAQVPG) are insert. The segment at 179 to 200 (LKQGLSPEGTAPGSGRSSAQVP) is disordered. Residues 216–218 (GMG), E236, 282–283 (NA), 307–311 (QTSAH), 317–318 (YL), and Y368 each bind NAD(+). C456 is a catalytic residue. An NAD(+)-binding site is contributed by G538.

It belongs to the urocanase family. NAD(+) is required as a cofactor.

The protein localises to the cytoplasm. It catalyses the reaction 4-imidazolone-5-propanoate = trans-urocanate + H2O. It participates in amino-acid degradation; L-histidine degradation into L-glutamate; N-formimidoyl-L-glutamate from L-histidine: step 2/3. Its function is as follows. Catalyzes the conversion of urocanate to 4-imidazolone-5-propionate. The sequence is that of Urocanate hydratase from Ralstonia nicotianae (strain ATCC BAA-1114 / GMI1000) (Ralstonia solanacearum).